Here is a 270-residue protein sequence, read N- to C-terminus: Type II restriction enzyme CeqI (270 aa).

It carries out the reaction Endonucleolytic cleavage of DNA to give specific double-stranded fragments with terminal 5'-phosphates.. Functionally, a P subtype restriction enzyme that recognizes the double-stranded sequence 5'-GATATC-3' and cleaves after T-3. The polypeptide is Type II restriction enzyme CeqI (ceqIR) (Rhodococcus hoagii (Corynebacterium equii)).